A 630-amino-acid polypeptide reads, in one-letter code: tRNA uridine 5-carboxymethylaminomethyl modification enzyme MnmG (630 aa).

15–20 serves as a coordination point for FAD; that stretch reads GAGHAG. 274–288 serves as a coordination point for NAD(+); the sequence is GPRYCPSIEDKIVRF.

This sequence belongs to the MnmG family. As to quaternary structure, homodimer. Heterotetramer of two MnmE and two MnmG subunits. FAD serves as cofactor.

It is found in the cytoplasm. Its function is as follows. NAD-binding protein involved in the addition of a carboxymethylaminomethyl (cmnm) group at the wobble position (U34) of certain tRNAs, forming tRNA-cmnm(5)s(2)U34. The protein is tRNA uridine 5-carboxymethylaminomethyl modification enzyme MnmG of Alkaliphilus oremlandii (strain OhILAs) (Clostridium oremlandii (strain OhILAs)).